The sequence spans 362 residues: Probable branched-chain-amino-acid aminotransferase (362 aa).

Lysine 202 carries the N6-(pyridoxal phosphate)lysine modification.

This sequence belongs to the class-IV pyridoxal-phosphate-dependent aminotransferase family. The cofactor is pyridoxal 5'-phosphate.

It carries out the reaction L-leucine + 2-oxoglutarate = 4-methyl-2-oxopentanoate + L-glutamate. The catalysed reaction is L-isoleucine + 2-oxoglutarate = (S)-3-methyl-2-oxopentanoate + L-glutamate. It catalyses the reaction L-valine + 2-oxoglutarate = 3-methyl-2-oxobutanoate + L-glutamate. It functions in the pathway amino-acid biosynthesis; L-isoleucine biosynthesis; L-isoleucine from 2-oxobutanoate: step 4/4. It participates in amino-acid biosynthesis; L-leucine biosynthesis; L-leucine from 3-methyl-2-oxobutanoate: step 4/4. The protein operates within amino-acid biosynthesis; L-valine biosynthesis; L-valine from pyruvate: step 4/4. Its function is as follows. Acts on leucine, isoleucine and valine. The chain is Probable branched-chain-amino-acid aminotransferase (ilvE) from Streptomyces coelicolor (strain ATCC BAA-471 / A3(2) / M145).